Reading from the N-terminus, the 200-residue chain is MMMFGKISRQLFSLKKIPWSCDSRYFWEWLNTVFNKVDYERIKDVGPDRAASEWLLRCGAKVRYCGHQKWLQDYNKLPGGSVDRYKIQAIDATDSCIMDIGFDHLVGLEHVERITLCRCHYIEDNCLQRLSQLENLRKSLLELEIIACGNVTDNGVIALRHFKNLKYLFLSDLPGIKDKEYLAEVFTKALPSLELKLNLK.

Residues 1 to 25 (MMMFGKISRQLFSLKKIPWSCDSRY) constitute a mitochondrion transit peptide. An N-terminal domain region spans residues 1–61 (MMMFGKISRQ…SEWLLRCGAK (61 aa)). Gly-59 is a binding site for Mg(2+). LRR repeat units follow at residues 62 to 87 (VRYCGHQKWLQDYNKLPGGSVDRYKI), 88 to 116 (QAIDATDSCIMDIGFDHLVGLEHVERITL), 117 to 141 (CRCHYIEDNCLQRLSQLENLRKSLL), and 142 to 173 (ELEIIACGNVTDNGVIALRHFKNLKYLFLSDL). Thr-93 serves as a coordination point for Mg(2+).

This sequence belongs to the ATP synthase subunit s family. In terms of assembly, homotetramer. Associates with ATP synthase.

The protein resides in the mitochondrion. It localises to the mitochondrion inner membrane. Its function is as follows. Involved in regulation of mitochondrial membrane ATP synthase. Necessary for H(+) conduction of ATP synthase. Facilitates energy-driven catalysis of ATP synthesis by blocking a proton leak through an alternative proton exit pathway. The protein is ATP synthase subunit s, mitochondrial of Rattus norvegicus (Rat).